A 273-amino-acid polypeptide reads, in one-letter code: 4-hydroxy-tetrahydrodipicolinate reductase (273 aa).

Residues 12 to 17 (GAGGRM) and glutamate 38 contribute to the NAD(+) site. Arginine 39 provides a ligand contact to NADP(+). NAD(+)-binding positions include 102–104 (GTT) and 126–129 (AANF). Histidine 159 acts as the Proton donor/acceptor in catalysis. Histidine 160 contributes to the (S)-2,3,4,5-tetrahydrodipicolinate binding site. The Proton donor role is filled by lysine 163. (S)-2,3,4,5-tetrahydrodipicolinate is bound at residue 169–170 (GT).

It belongs to the DapB family. Homotetramer.

It localises to the cytoplasm. It carries out the reaction (S)-2,3,4,5-tetrahydrodipicolinate + NAD(+) + H2O = (2S,4S)-4-hydroxy-2,3,4,5-tetrahydrodipicolinate + NADH + H(+). The catalysed reaction is (S)-2,3,4,5-tetrahydrodipicolinate + NADP(+) + H2O = (2S,4S)-4-hydroxy-2,3,4,5-tetrahydrodipicolinate + NADPH + H(+). The protein operates within amino-acid biosynthesis; L-lysine biosynthesis via DAP pathway; (S)-tetrahydrodipicolinate from L-aspartate: step 4/4. In terms of biological role, catalyzes the conversion of 4-hydroxy-tetrahydrodipicolinate (HTPA) to tetrahydrodipicolinate. The polypeptide is 4-hydroxy-tetrahydrodipicolinate reductase (Klebsiella pneumoniae subsp. pneumoniae (strain ATCC 700721 / MGH 78578)).